The following is a 616-amino-acid chain: Spastin (616 aa).

Positions 1 to 43 (MNSPGGRGKKKGSGGASNPVPPRPPPPCLAPAPPAAGPAPPPE) are disordered. Residues 1–50 (MNSPGGRGKKKGSGGASNPVPPRPPPPCLAPAPPAAGPAPPPESPHKRNL) are required for nuclear localization. At 1 to 56 (MNSPGGRGKKKGSGGASNPVPPRPPPPCLAPAPPAAGPAPPPESPHKRNLYYFSYP) the chain is on the cytoplasmic side. The tract at residues 1–80 (MNSPGGRGKK…LGLLFVWLCQ (80 aa)) is required for interaction with ATL1. The required for midbody localization stretch occupies residues 1-194 (MNSPGGRGKK…LVMAKDRLQL (194 aa)). The required for interaction with RTN1 stretch occupies residues 1–300 (MNSPGGRGKK…GTPKTNRTNK (300 aa)). The Nuclear localization signal signature appears at 4–11 (PGGRGKKK). The segment covering 19-43 (PVPPRPPPPCLAPAPPAAGPAPPPE) has biased composition (pro residues). The segment at 50-87 (LYYFSYPLFVGFALLRLVAFHLGLLFVWLCQRFSRALM) is required for interaction with SSNA1 and microtubules. Residues 57 to 77 (LFVGFALLRLVAFHLGLLFVW) constitute an intramembrane region (helical). Positions 59–67 (VGFALLRLV) match the Nuclear export signal motif. Topologically, residues 78–616 (LCQRFSRALM…WNKDFGDTTV (539 aa)) are cytoplasmic. The tract at residues 112-196 (EAERVRVFHK…MAKDRLQLLE (85 aa)) is sufficient for interaction with CHMP1B. A required for interaction with microtubules region spans residues 114 to 200 (ERVRVFHKQA…RLQLLEKMQP (87 aa)). The region spanning 120–195 (HKQAFEYISI…VMAKDRLQLL (76 aa)) is the MIT domain. The segment at 224-266 (HLQSESGAVPKRKDPLTHTSNSLPRSKTVMKTGSAGLSGHHRA) is disordered. The interval 228–616 (ESGAVPKRKD…WNKDFGDTTV (389 aa)) is sufficient for microtubule severing. The span at 240 to 254 (THTSNSLPRSKTVMK) shows a compositional bias: polar residues. Residues S245 and S268 each carry the phosphoserine modification. Positions 270-328 (SGLSMVSGVKQGSGPAPTTHKGTPKTNRTNKPSTPTTATRKKKDLKNFRNVDSNLANLI) are required for interaction with microtubules and microtubule severing. A disordered region spans residues 278 to 312 (VKQGSGPAPTTHKGTPKTNRTNKPSTPTTATRKKK). The span at 289–307 (HKGTPKTNRTNKPSTPTTA) shows a compositional bias: polar residues. T306 is modified (phosphothreonine). The short motif at 309-312 (RKKK) is the Nuclear localization signal element. The tract at residues 310–312 (KKK) is required for interaction with microtubules. ATP is bound at residue 382-389 (GPPGNGKT). A Phosphoserine modification is found at S597.

The protein belongs to the AAA ATPase family. Spastin subfamily. In terms of assembly, homohexamer. Mostly monomeric, but assembles into hexameric structure for short periods of time. Oligomerization seems to be a prerequisite for catalytic activity. Binding to ATP in a cleft between two adjacent subunits stabilizes the homohexameric form. Binds to microtubules at least in part via the alpha-tubulin and beta-tubulin tails. The hexamer adopts a ring conformation through which microtubules pass prior to being severed. Does not interact strongly with tubulin heterodimers. Interacts (via MIT domain) with CHMP1B; the interaction is direct. Interacts with SSNA1. Interacts with ATL1. Interacts with RTN1. Interacts with ZFYVE27. Isoform 1 but not isoform 3 interacts with RTN2. Interacts with REEP1. Interacts (via MIT domain) with IST1. Expressed in brain, heart, kidney, liver, lung, pancreas, placenta and skeletal muscle. The short isoforms may predominate in brain and spinal cord.

The protein localises to the membrane. It localises to the endoplasmic reticulum. It is found in the midbody. The protein resides in the cytoplasm. Its subcellular location is the cytoskeleton. The protein localises to the microtubule organizing center. It localises to the centrosome. It is found in the perinuclear region. The protein resides in the nucleus. Its subcellular location is the spindle. The protein localises to the cell projection. It localises to the axon. It is found in the endoplasmic reticulum membrane. The protein resides in the nucleus membrane. Its subcellular location is the lipid droplet. The protein localises to the endosome. The enzyme catalyses n ATP + n H2O + a microtubule = n ADP + n phosphate + (n+1) alpha/beta tubulin heterodimers.. With respect to regulation, allosteric enzyme with a cooperative mechanism; at least two neighbor subunits influence each other strongly in spastin hexamers. Microtubule binding promotes cooperative interactions among spastin subunits. ATP-bound enzyme interacts strongly and cooperatively with microtubules; this interaction stimulates ATP hydrolysis. In terms of biological role, ATP-dependent microtubule severing protein that specifically recognizes and cuts microtubules that are polyglutamylated. Preferentially recognizes and acts on microtubules decorated with short polyglutamate tails: severing activity increases as the number of glutamates per tubulin rises from one to eight, but decreases beyond this glutamylation threshold. Severing activity is not dependent on tubulin acetylation or detyrosination. Microtubule severing promotes reorganization of cellular microtubule arrays and the release of microtubules from the centrosome following nucleation. It is critical for the biogenesis and maintenance of complex microtubule arrays in axons, spindles and cilia. SPAST is involved in abscission step of cytokinesis and nuclear envelope reassembly during anaphase in cooperation with the ESCRT-III complex. Recruited at the midbody, probably by IST1, and participates in membrane fission during abscission together with the ESCRT-III complex. Recruited to the nuclear membrane by IST1 and mediates microtubule severing, promoting nuclear envelope sealing and mitotic spindle disassembly during late anaphase. Required for membrane traffic from the endoplasmic reticulum (ER) to the Golgi and endosome recycling. Recruited by IST1 to endosomes and regulates early endosomal tubulation and recycling by mediating microtubule severing. Probably plays a role in axon growth and the formation of axonal branches. Involved in lipid metabolism by regulating the size and distribution of lipid droplets. The sequence is that of Spastin from Homo sapiens (Human).